A 222-amino-acid chain; its full sequence is MSVAIVRFPGTNCEFDTQYAFSLFGGVTYIVWHQDKSLPTDCHLVVIPGGFSYGDYLRCGAIAQFSPIMRVIKDFALQGGYVLGICNGFQILCEAGLLPGALKRNINLHFISQMQSLRIVSKNNAFLRSYAPNQEIRLPIAHADGNYFIDERELLELRANEQILLEYTDNPNGSVDSIAGICNEKKNVFGLMPHPERAIEDMLGSCDGKAMLDNLLHIAEMK.

The region spanning Ser-2–Lys-222 is the Glutamine amidotransferase type-1 domain. Cys-86 acts as the Nucleophile in catalysis. Residues His-194 and Glu-196 contribute to the active site.

In terms of assembly, part of the FGAM synthase complex composed of 1 PurL, 1 PurQ and 2 PurS subunits.

The protein resides in the cytoplasm. It carries out the reaction N(2)-formyl-N(1)-(5-phospho-beta-D-ribosyl)glycinamide + L-glutamine + ATP + H2O = 2-formamido-N(1)-(5-O-phospho-beta-D-ribosyl)acetamidine + L-glutamate + ADP + phosphate + H(+). The catalysed reaction is L-glutamine + H2O = L-glutamate + NH4(+). Its pathway is purine metabolism; IMP biosynthesis via de novo pathway; 5-amino-1-(5-phospho-D-ribosyl)imidazole from N(2)-formyl-N(1)-(5-phospho-D-ribosyl)glycinamide: step 1/2. Its function is as follows. Part of the phosphoribosylformylglycinamidine synthase complex involved in the purines biosynthetic pathway. Catalyzes the ATP-dependent conversion of formylglycinamide ribonucleotide (FGAR) and glutamine to yield formylglycinamidine ribonucleotide (FGAM) and glutamate. The FGAM synthase complex is composed of three subunits. PurQ produces an ammonia molecule by converting glutamine to glutamate. PurL transfers the ammonia molecule to FGAR to form FGAM in an ATP-dependent manner. PurS interacts with PurQ and PurL and is thought to assist in the transfer of the ammonia molecule from PurQ to PurL. The sequence is that of Phosphoribosylformylglycinamidine synthase subunit PurQ from Helicobacter hepaticus (strain ATCC 51449 / 3B1).